The chain runs to 452 residues: UDP-N-acetylmuramoylalanine--D-glutamate ligase (452 aa).

Residue 115-121 (GTNGKTT) coordinates ATP.

It belongs to the MurCDEF family.

It is found in the cytoplasm. It catalyses the reaction UDP-N-acetyl-alpha-D-muramoyl-L-alanine + D-glutamate + ATP = UDP-N-acetyl-alpha-D-muramoyl-L-alanyl-D-glutamate + ADP + phosphate + H(+). The protein operates within cell wall biogenesis; peptidoglycan biosynthesis. In terms of biological role, cell wall formation. Catalyzes the addition of glutamate to the nucleotide precursor UDP-N-acetylmuramoyl-L-alanine (UMA). The protein is UDP-N-acetylmuramoylalanine--D-glutamate ligase of Geobacter metallireducens (strain ATCC 53774 / DSM 7210 / GS-15).